The following is a 27-amino-acid chain: Conotoxin flf14b (27 aa).

2 disulfides stabilise this stretch: Cys6-Cys26 and Cys10-Cys22.

As to expression, expressed by the venom duct.

The protein localises to the secreted. This is Conotoxin flf14b from Conus anabathrum floridanus (Florida cone).